Reading from the N-terminus, the 261-residue chain is MLVVLFTVALLALSSAQGPREENQNQIQIPNQRPPPSGFQPRPPVNGSQQGPPPPGGPQPRPPQGPPPPGGPQPRPPQGPPPPGGPQPRPPQGPPPPGGPQQRPPQGPPPPGGPQQRPPQGPPPPGGPQPRPPQGPPPPGGPQLRPPQGPPPPAGPQPRPPQGPPPPAGPQPRPPQGPPPTGPQPRPTQGPPPTGGPQQRPPQGPPPPGGPQPRPPQGPPPPGGPQPSPTQGPPPTGGPQQTPPLAGNTQGPPQGRPQGPR.

The first 15 residues, 1–15, serve as a signal peptide directing secretion; sequence MLVVLFTVALLALSS. The segment at 15-261 is disordered; sequence SAQGPREENQ…PPQGRPQGPR (247 aa). 2 stretches are compositionally biased toward pro residues: residues 32 to 44 and 51 to 237; these read QRPP…PRPP and GPPP…PPTG. Residues 238–261 show a composition bias toward low complexity; sequence GPQQTPPLAGNTQGPPQGRPQGPR.

The protein resides in the secreted. The chain is Proline-rich protein HaeIII subfamily 1 (Prh1) from Mus musculus (Mouse).